Consider the following 660-residue polypeptide: Bifunctional polymyxin resistance protein ArnA (660 aa).

Positions 1–304 (MKTVVFAYHD…TLGLVQGSRL (304 aa)) are formyltransferase ArnAFT. 86 to 88 (HLI) provides a ligand contact to (6R)-10-formyltetrahydrofolate. Residue histidine 104 is the Proton donor; for formyltransferase activity of the active site. Residues arginine 114 and 136 to 140 (VKRAD) each bind (6R)-10-formyltetrahydrofolate. The tract at residues 314 to 660 (RRTRVLILGV…RTVDLTDKPS (347 aa)) is dehydrogenase ArnADH. NAD(+) contacts are provided by residues aspartate 347 and 368–369 (DI). Residues alanine 393, tyrosine 398, and 432–433 (TS) each bind UDP-alpha-D-glucuronate. Glutamate 434 (proton acceptor; for decarboxylase activity) is an active-site residue. Residues arginine 460, asparagine 492, 526 to 535 (KLIDGGKQKR), and tyrosine 613 contribute to the UDP-alpha-D-glucuronate site. Catalysis depends on arginine 619, which acts as the Proton donor; for decarboxylase activity.

The protein in the N-terminal section; belongs to the Fmt family. UDP-L-Ara4N formyltransferase subfamily. In the C-terminal section; belongs to the NAD(P)-dependent epimerase/dehydratase family. UDP-glucuronic acid decarboxylase subfamily. As to quaternary structure, homohexamer, formed by a dimer of trimers.

The enzyme catalyses UDP-alpha-D-glucuronate + NAD(+) = UDP-beta-L-threo-pentopyranos-4-ulose + CO2 + NADH. It catalyses the reaction UDP-4-amino-4-deoxy-beta-L-arabinose + (6R)-10-formyltetrahydrofolate = UDP-4-deoxy-4-formamido-beta-L-arabinose + (6S)-5,6,7,8-tetrahydrofolate + H(+). It functions in the pathway nucleotide-sugar biosynthesis; UDP-4-deoxy-4-formamido-beta-L-arabinose biosynthesis; UDP-4-deoxy-4-formamido-beta-L-arabinose from UDP-alpha-D-glucuronate: step 1/3. It participates in nucleotide-sugar biosynthesis; UDP-4-deoxy-4-formamido-beta-L-arabinose biosynthesis; UDP-4-deoxy-4-formamido-beta-L-arabinose from UDP-alpha-D-glucuronate: step 3/3. The protein operates within bacterial outer membrane biogenesis; lipopolysaccharide biosynthesis. In terms of biological role, bifunctional enzyme that catalyzes the oxidative decarboxylation of UDP-glucuronic acid (UDP-GlcUA) to UDP-4-keto-arabinose (UDP-Ara4O) and the addition of a formyl group to UDP-4-amino-4-deoxy-L-arabinose (UDP-L-Ara4N) to form UDP-L-4-formamido-arabinose (UDP-L-Ara4FN). The modified arabinose is attached to lipid A and is required for resistance to polymyxin and cationic antimicrobial peptides. This Escherichia coli O1:K1 / APEC protein is Bifunctional polymyxin resistance protein ArnA.